We begin with the raw amino-acid sequence, 331 residues long: Serpentine receptor class alpha-9 (331 aa).

A run of 7 helical transmembrane segments spans residues 26–46, 58–78, 104–124, 142–162, 189–209, 238–258, and 275–295; these read IDLL…QLVL, LILE…IEAI, YLKV…GLMI, IIGF…GKLF, YFTV…LLKI, VCFL…GVGA, and LCVV…LLLI.

It belongs to the nematode receptor-like protein sra family.

It localises to the membrane. The chain is Serpentine receptor class alpha-9 (sra-9) from Caenorhabditis elegans.